Here is a 385-residue protein sequence, read N- to C-terminus: S-adenosylmethionine synthase (385 aa).

H16 lines the ATP pocket. Residue D18 participates in Mg(2+) binding. Residue E44 participates in K(+) binding. L-methionine-binding residues include E57 and Q100. The interval 100–110 is flexible loop; sequence QSPDINQGVDR. ATP is bound by residues 164–166, 230–231, D239, 245–246, A262, and K266; these read DGK, KF, and RK. D239 contacts L-methionine. Residue K270 participates in L-methionine binding.

Belongs to the AdoMet synthase family. As to quaternary structure, homotetramer; dimer of dimers. Mg(2+) serves as cofactor. K(+) is required as a cofactor.

It localises to the cytoplasm. It carries out the reaction L-methionine + ATP + H2O = S-adenosyl-L-methionine + phosphate + diphosphate. The protein operates within amino-acid biosynthesis; S-adenosyl-L-methionine biosynthesis; S-adenosyl-L-methionine from L-methionine: step 1/1. Its function is as follows. Catalyzes the formation of S-adenosylmethionine (AdoMet) from methionine and ATP. The overall synthetic reaction is composed of two sequential steps, AdoMet formation and the subsequent tripolyphosphate hydrolysis which occurs prior to release of AdoMet from the enzyme. The chain is S-adenosylmethionine synthase from Helicobacter acinonychis (strain Sheeba).